A 435-amino-acid polypeptide reads, in one-letter code: uncharacterized protein (435 aa).

A Phosphoserine modification is found at Ser47. Disordered regions lie at residues 174–210 (LKKKKESIKTAQTTEAQGADHNEEDEEDEEDEEDDED) and 290–372 (KAEA…EDNK). Residues 195–210 (NEEDEEDEEDEEDDED) show a composition bias toward acidic residues. Residues 290-304 (KAEATGEAHSKDVSA) show a composition bias toward basic and acidic residues. Residues 308 to 318 (SANTTTSFDET) are compositionally biased toward polar residues. Composition is skewed to basic and acidic residues over residues 322-340 (EDEKPKSEGAEEESKKEAN) and 347-361 (VADRKEDLKSNKVND).

The protein localises to the cytoplasm. This is an uncharacterized protein from Saccharomyces cerevisiae (strain ATCC 204508 / S288c) (Baker's yeast).